Here is a 422-residue protein sequence, read N- to C-terminus: UDP-N-acetylglucosamine 1-carboxyvinyltransferase (422 aa).

22–23 (KN) is a phosphoenolpyruvate binding site. Arg95 lines the UDP-N-acetyl-alpha-D-glucosamine pocket. The Proton donor role is filled by Cys119. Cys119 carries the post-translational modification 2-(S-cysteinyl)pyruvic acid O-phosphothioketal. Residues 124 to 128 (RPIDQ), Asp309, and Val331 each bind UDP-N-acetyl-alpha-D-glucosamine.

This sequence belongs to the EPSP synthase family. MurA subfamily.

The protein resides in the cytoplasm. The enzyme catalyses phosphoenolpyruvate + UDP-N-acetyl-alpha-D-glucosamine = UDP-N-acetyl-3-O-(1-carboxyvinyl)-alpha-D-glucosamine + phosphate. Its pathway is cell wall biogenesis; peptidoglycan biosynthesis. Cell wall formation. Adds enolpyruvyl to UDP-N-acetylglucosamine. The chain is UDP-N-acetylglucosamine 1-carboxyvinyltransferase from Anaeromyxobacter dehalogenans (strain 2CP-1 / ATCC BAA-258).